Here is a 572-residue protein sequence, read N- to C-terminus: Cytochrome P450 monooxygenase xilC (572 aa).

Residue cysteine 515 coordinates heme.

It belongs to the cytochrome P450 family. It depends on heme as a cofactor.

It functions in the pathway secondary metabolite biosynthesis. Cytochrome P450 monooxygenase; part of the gene cluster that mediates the biosynthesis of the 6-methyl-2-pyrone derivative xylariolide D. XilC hydroxylates the 5-alkyl-6-methyl-2-pyrone backbone called prexylariolide D, produced by the highly reducing polyketide synthase xilA, on its side chain to form xylariolide D. The polypeptide is Cytochrome P450 monooxygenase xilC (Penicillium rubens (strain ATCC 28089 / DSM 1075 / NRRL 1951 / Wisconsin 54-1255) (Penicillium chrysogenum)).